The chain runs to 365 residues: Phosphate acyltransferase (365 aa).

It belongs to the PlsX family. Homodimer. Probably interacts with PlsY.

The protein localises to the cytoplasm. It catalyses the reaction a fatty acyl-[ACP] + phosphate = an acyl phosphate + holo-[ACP]. It participates in lipid metabolism; phospholipid metabolism. Catalyzes the reversible formation of acyl-phosphate (acyl-PO(4)) from acyl-[acyl-carrier-protein] (acyl-ACP). This enzyme utilizes acyl-ACP as fatty acyl donor, but not acyl-CoA. This Klebsiella pneumoniae (strain 342) protein is Phosphate acyltransferase.